We begin with the raw amino-acid sequence, 187 residues long: ATP synthase subunit b, chloroplastic (187 aa).

A helical transmembrane segment spans residues leucine 34 to leucine 56.

This sequence belongs to the ATPase B chain family. F-type ATPases have 2 components, F(1) - the catalytic core - and F(0) - the membrane proton channel. F(1) has five subunits: alpha(3), beta(3), gamma(1), delta(1), epsilon(1). F(0) has four main subunits: a(1), b(1), b'(1) and c(10-14). The alpha and beta chains form an alternating ring which encloses part of the gamma chain. F(1) is attached to F(0) by a central stalk formed by the gamma and epsilon chains, while a peripheral stalk is formed by the delta, b and b' chains.

The protein localises to the plastid. It localises to the chloroplast thylakoid membrane. F(1)F(0) ATP synthase produces ATP from ADP in the presence of a proton or sodium gradient. F-type ATPases consist of two structural domains, F(1) containing the extramembraneous catalytic core and F(0) containing the membrane proton channel, linked together by a central stalk and a peripheral stalk. During catalysis, ATP synthesis in the catalytic domain of F(1) is coupled via a rotary mechanism of the central stalk subunits to proton translocation. Functionally, component of the F(0) channel, it forms part of the peripheral stalk, linking F(1) to F(0). The polypeptide is ATP synthase subunit b, chloroplastic (Chlorokybus atmophyticus (Soil alga)).